A 117-amino-acid polypeptide reads, in one-letter code: MGIKYSSKINKIRTFALSLIFVGVIVMYLGLFFRTSPIIMTLFMVLGLLFLVASGIVYFWIGTLSTRAVQVVCPSCGKVTKMLGRVDLCMFCREPLTLDRELEGKEFDEKYNKKRKN.

2 helical membrane-spanning segments follow: residues 12–32 and 42–62; these read IRTF…LGLF and LFMV…FWIG.

The protein belongs to the UPF0295 family.

The protein localises to the cell membrane. The protein is UPF0295 protein GTNG_0491 of Geobacillus thermodenitrificans (strain NG80-2).